We begin with the raw amino-acid sequence, 138 residues long: Large ribosomal subunit protein bL17 (138 aa).

It belongs to the bacterial ribosomal protein bL17 family. As to quaternary structure, part of the 50S ribosomal subunit. Contacts protein L32.

This is Large ribosomal subunit protein bL17 from Methylorubrum extorquens (strain PA1) (Methylobacterium extorquens).